An 85-amino-acid polypeptide reads, in one-letter code: Splicing factor 3B subunit 5 (85 aa).

Belongs to the SF3B5 family. As to quaternary structure, component of the SF3B complex. SF3B complex associates with the splicing factor SF3A complex and a 12S RNA unit to form the U2 small nuclear ribonucleoproteins complex (U2 snRNP). Identified in the SAGA transcription regulatory histone acetylation (HAT) complex; the interaction is RNA-independent.

The protein localises to the nucleus. In terms of biological role, involved in pre-mRNA splicing as component of spliceosome. As part of the spliceosome complex, plays a role in the regulation of spermatogonial differentiation. When associated with the SAGA transcription regulatory histone acetylation (HAT) complex, might be involved in the transcriptional activation of a subset of SAGA-regulated genes. In Drosophila melanogaster (Fruit fly), this protein is Splicing factor 3B subunit 5.